Here is a 147-residue protein sequence, read N- to C-terminus: Nucleoside diphosphate kinase (147 aa).

Residues Lys9, Phe57, Arg85, Thr91, Arg102, and Asn112 each contribute to the ATP site. His115 acts as the Pros-phosphohistidine intermediate in catalysis.

Belongs to the NDK family. In terms of assembly, homotetramer. Mg(2+) serves as cofactor.

The protein localises to the cytoplasm. The enzyme catalyses a 2'-deoxyribonucleoside 5'-diphosphate + ATP = a 2'-deoxyribonucleoside 5'-triphosphate + ADP. It catalyses the reaction a ribonucleoside 5'-diphosphate + ATP = a ribonucleoside 5'-triphosphate + ADP. Major role in the synthesis of nucleoside triphosphates other than ATP. The ATP gamma phosphate is transferred to the NDP beta phosphate via a ping-pong mechanism, using a phosphorylated active-site intermediate. This chain is Nucleoside diphosphate kinase, found in Fervidobacterium nodosum (strain ATCC 35602 / DSM 5306 / Rt17-B1).